A 92-amino-acid polypeptide reads, in one-letter code: Small ribosomal subunit protein uS19c (92 aa).

It belongs to the universal ribosomal protein uS19 family.

It is found in the plastid. The protein resides in the chloroplast. In terms of biological role, protein S19 forms a complex with S13 that binds strongly to the 16S ribosomal RNA. This chain is Small ribosomal subunit protein uS19c, found in Eucalyptus globulus subsp. globulus (Tasmanian blue gum).